A 154-amino-acid chain; its full sequence is SsrA-binding protein (154 aa).

This sequence belongs to the SmpB family.

Its subcellular location is the cytoplasm. In terms of biological role, required for rescue of stalled ribosomes mediated by trans-translation. Binds to transfer-messenger RNA (tmRNA), required for stable association of tmRNA with ribosomes. tmRNA and SmpB together mimic tRNA shape, replacing the anticodon stem-loop with SmpB. tmRNA is encoded by the ssrA gene; the 2 termini fold to resemble tRNA(Ala) and it encodes a 'tag peptide', a short internal open reading frame. During trans-translation Ala-aminoacylated tmRNA acts like a tRNA, entering the A-site of stalled ribosomes, displacing the stalled mRNA. The ribosome then switches to translate the ORF on the tmRNA; the nascent peptide is terminated with the 'tag peptide' encoded by the tmRNA and targeted for degradation. The ribosome is freed to recommence translation, which seems to be the essential function of trans-translation. The polypeptide is SsrA-binding protein (Streptococcus thermophilus (strain CNRZ 1066)).